Here is a 445-residue protein sequence, read N- to C-terminus: Lateral flagellar hook-associated protein 2 (445 aa).

Residues 388–423 adopt a coiled-coil conformation; it reads SGAFKSRKEALQANLDRLSDKQTTLERKYDMSYKRY.

The protein belongs to the FliD family. Homopentamer.

It localises to the secreted. Its subcellular location is the bacterial flagellum. Functionally, required for the morphogenesis and for the elongation of the flagellar filament by facilitating polymerization of the flagellin monomers at the tip of growing filament. Forms a capping structure, which prevents flagellin subunits (transported through the central channel of the flagellum) from leaking out without polymerization at the distal end. Essential for swarming motility. This chain is Lateral flagellar hook-associated protein 2 (fliDL), found in Vibrio parahaemolyticus serotype O3:K6 (strain RIMD 2210633).